We begin with the raw amino-acid sequence, 109 residues long: MKVLVLFSVLFLTLFSYSSTEAIDEFDSDAEEDMLSLMANEQVRAKACTPRLHDCSHDRHSCCRGELFKDVCYCFYPEGEDKTEVCSCQQPKSHKYIEKVVDKAKTVVG.

An N-terminal signal peptide occupies residues 1-22 (MKVLVLFSVLFLTLFSYSSTEA). A propeptide spanning residues 23–44 (IDEFDSDAEEDMLSLMANEQVR) is cleaved from the precursor. Residues 45–88 (AKACTPRLHDCSHDRHSCCRGELFKDVCYCFYPEGEDKTEVCSC) form a knottin domain region. 4 disulfides stabilise this stretch: Cys-48-Cys-63, Cys-55-Cys-72, Cys-62-Cys-88, and Cys-74-Cys-86. The linear cationic cytotoxin domain stretch occupies residues 89 to 108 (QQPKSHKYIEKVVDKAKTVV).

This sequence belongs to the neurotoxin 19 (CSTX) family. 05 (U4-Lctx) subfamily. As to expression, expressed by the venom gland.

It localises to the secreted. Enhances the high-affinity desensitization of human P2RX3 purinoceptors. The polypeptide is U4-lycotoxin-Ls1a (Lycosa singoriensis (Wolf spider)).